Reading from the N-terminus, the 241-residue chain is 1-(5-phosphoribosyl)-5-[(5-phosphoribosylamino)methylideneamino] imidazole-4-carboxamide isomerase (241 aa).

The Proton acceptor role is filled by Asp10. Catalysis depends on Asp131, which acts as the Proton donor.

Belongs to the HisA/HisF family.

It localises to the cytoplasm. It carries out the reaction 1-(5-phospho-beta-D-ribosyl)-5-[(5-phospho-beta-D-ribosylamino)methylideneamino]imidazole-4-carboxamide = 5-[(5-phospho-1-deoxy-D-ribulos-1-ylimino)methylamino]-1-(5-phospho-beta-D-ribosyl)imidazole-4-carboxamide. Its pathway is amino-acid biosynthesis; L-histidine biosynthesis; L-histidine from 5-phospho-alpha-D-ribose 1-diphosphate: step 4/9. The chain is 1-(5-phosphoribosyl)-5-[(5-phosphoribosylamino)methylideneamino] imidazole-4-carboxamide isomerase from Hyphomonas neptunium (strain ATCC 15444).